Consider the following 822-residue polypeptide: Valine--tRNA ligase (822 aa).

Residues 41 to 51 (PNVTGQLHLGH) carry the 'HIGH' region motif. The 'KMSKS' region motif lies at 511 to 515 (KMSKS). K514 provides a ligand contact to ATP. A coiled-coil region spans residues 765–822 (EQKGRELKEIQFLKSEILRAEKILTNKGFLEKAPREKIDLERTKLEKLKEKLAFYEKK).

This sequence belongs to the class-I aminoacyl-tRNA synthetase family. ValS type 1 subfamily. In terms of assembly, monomer.

The protein localises to the cytoplasm. It carries out the reaction tRNA(Val) + L-valine + ATP = L-valyl-tRNA(Val) + AMP + diphosphate. Catalyzes the attachment of valine to tRNA(Val). As ValRS can inadvertently accommodate and process structurally similar amino acids such as threonine, to avoid such errors, it has a 'posttransfer' editing activity that hydrolyzes mischarged Thr-tRNA(Val) in a tRNA-dependent manner. In Mesomycoplasma hyopneumoniae (strain 7448) (Mycoplasma hyopneumoniae), this protein is Valine--tRNA ligase.